A 173-amino-acid polypeptide reads, in one-letter code: Ribulose bisphosphate carboxylase small subunit, chloroplastic 1 (173 aa).

The transit peptide at 1 to 49 directs the protein to the chloroplast; the sequence is MASIPATVATVAQANMVAPFTGLKANAAFPVTKKVNDFSTLPSNGGRVQ.

This sequence belongs to the RuBisCO small chain family. Heterohexadecamer of 8 large and 8 small subunits.

It is found in the plastid. It localises to the chloroplast. Functionally, ruBisCO catalyzes two reactions: the carboxylation of D-ribulose 1,5-bisphosphate, the primary event in carbon dioxide fixation, as well as the oxidative fragmentation of the pentose substrate. Both reactions occur simultaneously and in competition at the same active site. Although the small subunit is not catalytic it is essential for maximal activity. In Flaveria pringlei, this protein is Ribulose bisphosphate carboxylase small subunit, chloroplastic 1.